The following is a 394-amino-acid chain: Protein-glutamate methylesterase/protein-glutamine glutaminase of group 2 operon (394 aa).

A Response regulatory domain is found at 21–139 (RVMVVDDSAV…ELTGADTFKR (119 aa)). A 4-aspartylphosphate modification is found at Asp72. A disordered region spans residues 148–201 (LGAAARRSGPRREGTAAARPPGAAAQPTSGYTLPSPVRAKPETGPLTVRPLPPD). Over residues 162–172 (TAAARPPGAAA) the composition is skewed to low complexity. Residues 200–382 (PDGRPDVIAI…SAILPLKEIG (183 aa)) enclose the CheB-type methylesterase domain. Active-site residues include Ser212, His238, and Asp334.

Belongs to the CheB family. In terms of processing, phosphorylated by CheA. Phosphorylation of the N-terminal regulatory domain activates the methylesterase activity.

The protein localises to the cytoplasm. It catalyses the reaction [protein]-L-glutamate 5-O-methyl ester + H2O = L-glutamyl-[protein] + methanol + H(+). The catalysed reaction is L-glutaminyl-[protein] + H2O = L-glutamyl-[protein] + NH4(+). Its function is as follows. Involved in chemotaxis. Part of a chemotaxis signal transduction system that modulates chemotaxis in response to various stimuli. Catalyzes the demethylation of specific methylglutamate residues introduced into the chemoreceptors (methyl-accepting chemotaxis proteins or MCP) by CheR. Also mediates the irreversible deamidation of specific glutamine residues to glutamic acid. This is Protein-glutamate methylesterase/protein-glutamine glutaminase of group 2 operon from Rhodospirillum centenum (strain ATCC 51521 / SW).